We begin with the raw amino-acid sequence, 415 residues long: MAASTSHLRSLCSSTRSLSRSGVIVTPIACRGYATTDPSPSATTPTPVRRRTTFKDKLNAGPSFSDFVSNGNDNAPLDPSEAYALKTALVGPAGRKKEMTRLPSWLKTPIPDSKNYQRLKKDLRGLNLHTVCEEARCPNISDCWGGSDKSSATATIMLMGDTCTRGCRFCSVKTSRAPPPLDPHEPENTAEAISRWGLGYVVLTSVDRDDLVDGGARHFAETVIKIKQKAPSILVECLTGDYAGDLDMVKLVARSGLDVYAHNVETVEALTPQVRDRRANFQQSLRVLDAAKKAQPTLITKTSLMLGLGETDEQLWDALRQLRAVNVDVVTFGQYMRPTKRHMAVHEYVTPDRFELWRQRALEMGFLYCASGPLVRSSYKAGEAFIENVLKKRRAASGGAETIGERPVAVDEASR.

The transit peptide at 1-33 (MAASTSHLRSLCSSTRSLSRSGVIVTPIACRGY) directs the protein to the mitochondrion. [4Fe-4S] cluster contacts are provided by C132, C137, C143, C163, C167, C170, and S378. Residues 148–367 (DKSSATATIM…RQRALEMGFL (220 aa)) form the Radical SAM core domain.

Belongs to the radical SAM superfamily. Lipoyl synthase family. It depends on [4Fe-4S] cluster as a cofactor.

The protein localises to the mitochondrion. It catalyses the reaction [[Fe-S] cluster scaffold protein carrying a second [4Fe-4S](2+) cluster] + N(6)-octanoyl-L-lysyl-[protein] + 2 oxidized [2Fe-2S]-[ferredoxin] + 2 S-adenosyl-L-methionine + 4 H(+) = [[Fe-S] cluster scaffold protein] + N(6)-[(R)-dihydrolipoyl]-L-lysyl-[protein] + 4 Fe(3+) + 2 hydrogen sulfide + 2 5'-deoxyadenosine + 2 L-methionine + 2 reduced [2Fe-2S]-[ferredoxin]. It participates in protein modification; protein lipoylation via endogenous pathway; protein N(6)-(lipoyl)lysine from octanoyl-[acyl-carrier-protein]: step 2/2. Functionally, catalyzes the radical-mediated insertion of two sulfur atoms into the C-6 and C-8 positions of the octanoyl moiety bound to the lipoyl domains of lipoate-dependent enzymes, thereby converting the octanoylated domains into lipoylated derivatives. In Aspergillus clavatus (strain ATCC 1007 / CBS 513.65 / DSM 816 / NCTC 3887 / NRRL 1 / QM 1276 / 107), this protein is Lipoyl synthase, mitochondrial.